Consider the following 378-residue polypeptide: MLSPTLELACDLIRRPSVTPVDAGCQELMMARLANVGFALEQMRIENVDNFWASHGGNDGPVLCFAGHTDVVPTGPLQAWNIPPFDAFIDDQGMLHGRGAADMKGSLAAMLVAAERFVVDYPDHRGSVAFLITSDEEGPAHHGTKAVVERLVARQQRLDWCIVGEPSSTTLVGDIVKNGRRGSLGATLTLRGVQGHVAYPHLAKNPIHLLAPALAELVSEHWDSGNAFFPPTSFQVSNLNSGTGATNVIPGELVAVFNFRFSTESTVESLKSRVAEILDKHSLDWHIDWALSGLPFLTEPGALLDAVASSIKAVTGRDTQASTSGGTSDGRFIATMGTQVVELGPVNATIHQVNECILASDLDVLTEIYYETLIKLLA.

Position 68 (His68) interacts with Zn(2+). Asp70 is a catalytic residue. Asp102 contributes to the Zn(2+) binding site. Glu136 serves as the catalytic Proton acceptor. The Zn(2+) site is built by Glu137, Glu165, and His351.

This sequence belongs to the peptidase M20A family. DapE subfamily. In terms of assembly, homodimer. Zn(2+) is required as a cofactor. The cofactor is Co(2+).

The enzyme catalyses N-succinyl-(2S,6S)-2,6-diaminopimelate + H2O = (2S,6S)-2,6-diaminopimelate + succinate. The protein operates within amino-acid biosynthesis; L-lysine biosynthesis via DAP pathway; LL-2,6-diaminopimelate from (S)-tetrahydrodipicolinate (succinylase route): step 3/3. Catalyzes the hydrolysis of N-succinyl-L,L-diaminopimelic acid (SDAP), forming succinate and LL-2,6-diaminopimelate (DAP), an intermediate involved in the bacterial biosynthesis of lysine and meso-diaminopimelic acid, an essential component of bacterial cell walls. This Pseudomonas syringae pv. syringae protein is Succinyl-diaminopimelate desuccinylase.